The primary structure comprises 360 residues: Zinc metalloproteinase nas-5 (360 aa).

Positions Met-1–Gly-21 are cleaved as a signal peptide. One can recognise a Peptidase M12A domain in the interval Asn-61–Ser-269. The N-linked (GlcNAc...) asparagine glycan is linked to Asn-108. Cystine bridges form between Cys-111/Cys-268 and Cys-134/Cys-157. Residue His-165 participates in Zn(2+) binding. Glu-166 is an active-site residue. Residues His-169 and His-175 each coordinate Zn(2+). A PLAC domain is found at Gln-299 to Thr-336.

Zn(2+) is required as a cofactor.

It localises to the secreted. In terms of biological role, metalloprotease. This chain is Zinc metalloproteinase nas-5 (nas-5), found in Caenorhabditis elegans.